The sequence spans 1791 residues: Sodium channel protein type 11 subunit alpha (1791 aa).

At 1-126 (MDDRCYPVIF…SIRSLAIRVS (126 aa)) the chain is on the cytoplasmic side. An I repeat occupies 115 to 408 (FNSIRSLAIR…VTMAYEEQNK (294 aa)). A helical membrane pass occupies residues 127-148 (VHSLFSMFIIGTVIINCVFMAT). Residues 149 to 156 (GPAKNSNS) are Extracellular-facing. A helical transmembrane segment spans residues 157–180 (NNTDIAECVFTGIYIFEALIKILA). The Cytoplasmic portion of the chain corresponds to 181 to 192 (RGFILDEFSFLR). A helical transmembrane segment spans residues 193 to 212 (DPWNWLDSIVIGIAIVSYIP). Residues 213–219 (GITIKLL) are Extracellular-facing. Residues 220–239 (PLRTFRVFRALKAISVVSRL) traverse the membrane as a helical; Voltage-sensor segment. At 240–255 (KVIVGALLRSVKKLVN) the chain is on the cytoplasmic side. Residues 256–269 (VIILTFFCLSIFAL) form a helical membrane-spanning segment. Residues 270–344 (VGQQLFMGSL…PDYNYTNFDN (75 aa)) lie on the Extracellular side of the membrane. C283 and C322 are joined by a disulfide. N-linked (GlcNAc...) asparagine glycosylation is found at N290 and N338. Residues 345–369 (FGWSFLAMFRLMTQDSWEKLYQQTL) constitute an intramembrane region (pore-forming). Residues 370 to 376 (RTTGLYS) are Extracellular-facing. The helical transmembrane segment at 377–402 (VFFFIVVIFLGSFYLINLTLAVVTMA) threads the bilayer. The Cytoplasmic segment spans residues 403 to 572 (YEEQNKNVAA…WLCVKKVLRT (170 aa)). Residues 559-833 (CCPQWLCVKK…EGEARKTKVQ (275 aa)) form an II repeat. A helical membrane pass occupies residues 573–596 (VMTDPFTELAITICIIINTVFLAM). The Extracellular segment spans residues 597–607 (EHHKMEASFEK). Residues 608–631 (MLNIGNLVFTSIFIAEMCLKIIAL) traverse the membrane as a helical segment. Topologically, residues 632–639 (DPYHYFRR) are cytoplasmic. A helical membrane pass occupies residues 640–659 (GWNIFDSIVALLSFADVMNC). The Extracellular segment spans residues 660–667 (VLQKRSWP). The helical; Voltage-sensor transmembrane segment at 668–687 (FLRSFRVLRVFKLAKSWPTL) threads the bilayer. The Cytoplasmic segment spans residues 688–702 (NTLIKIIGNSVGALG). A helical transmembrane segment spans residues 703–725 (SLTVVLVIVIFIFSVVGMQLFGR). Residues 726–753 (SFNSQKSPKLCNPTGPTVSCLRHWHMGD) are Extracellular-facing. The pore-forming intramembrane region spans 754-774 (FWHSFLVVFRILCGEWIENMW). Residues 775–785 (ECMQEANASSS) lie on the Extracellular side of the membrane. A disulfide bond links C776 and C787. A glycan (N-linked (GlcNAc...) asparagine) is linked at N781. A helical transmembrane segment spans residues 786–811 (LCVIVFILITVIGKLVVLNLFIALLL). Residues 812–1051 (NSFSNEERNG…WWNLRKTCYQ (240 aa)) are Cytoplasmic-facing. One copy of the III repeat lies at 1044-1339 (NLRKTCYQIV…KKYYNAMKKL (296 aa)). Residues 1052–1074 (IVKHSWFESFIIFVILLSSGALI) form a helical membrane-spanning segment. At 1075-1088 (FEDVHLENQPKIQE) the chain is on the extracellular side. The helical transmembrane segment at 1089–1114 (LLNCTDIIFTHIFILEMVLKWVAFGF) threads the bilayer. Residues 1115–1120 (GKYFTS) are Cytoplasmic-facing. The chain crosses the membrane as a helical span at residues 1121-1138 (AWCCLDFIIVIVSVTTLI). Position 1139 (N1139) is a topological domain, extracellular. The chain crosses the membrane as a helical; Voltage-sensor span at residues 1140–1161 (LMELKSFRTLRALRPLRALSQF). The Cytoplasmic portion of the chain corresponds to 1162 to 1180 (EGMKVVVNALIGAIPAILN). Residues 1181–1202 (VLLVCLIFWLVFCILGVYFFSG) traverse the membrane as a helical segment. Topologically, residues 1203–1243 (KFGKCINGTDSVINYTIITNKSQCESGNFSWINQKVNFDNV) are extracellular. N-linked (GlcNAc...) asparagine glycans are attached at residues N1209, N1216, N1222, and N1230. Residues 1244–1265 (GNAYLALLQVATFKGWMDIIYA) constitute an intramembrane region (pore-forming). Residues 1266–1281 (AVDSTEKEQQPEFESN) lie on the Extracellular side of the membrane. A helical membrane pass occupies residues 1282 to 1308 (SLGYIYFVVFIIFGSFFTLNLFIGVII). The Cytoplasmic portion of the chain corresponds to 1309-1361 (DNFNQQQKKLGGQDIFMTEEQKKYYNAMKKLGSKKPQKPIPRPLNKCQGLVFD). One copy of the IV repeat lies at 1348 to 1639 (IPRPLNKCQG…WEKFDPEATQ (292 aa)). Residues 1362–1385 (IVTSQIFDIIIISLIILNMISMMA) form a helical membrane-spanning segment. The Extracellular portion of the chain corresponds to 1386-1396 (ESYNQPKAMKS). A helical transmembrane segment spans residues 1397–1420 (ILDHLNWVFVVIFTLECLIKIFAL). Topologically, residues 1421–1426 (RQYYFT) are cytoplasmic. Residues 1427-1450 (NGWNLFDCVVVLLSIVSTMISTLE) traverse the membrane as a helical segment. The Extracellular portion of the chain corresponds to 1451–1461 (NQEHIPFPPTL). Residues 1462-1484 (FRIVRLARIGRILRLVRAARGIR) form a helical; Voltage-sensor membrane-spanning segment. The Cytoplasmic segment spans residues 1485–1499 (TLLFALMMSLPSLFN). The chain crosses the membrane as a helical span at residues 1500-1522 (IGLLLFLIMFIYAILGMNWFSKV). Residues 1523-1536 (NPESGIDDIFNFKT) are Extracellular-facing. The segment at residues 1537–1559 (FASSMLCLFQISTSAGWDSLLSP) is an intramembrane region (pore-forming). The Extracellular portion of the chain corresponds to 1560-1579 (MLRSKESCNSSSENCHLPGI). Residue N1568 is glycosylated (N-linked (GlcNAc...) asparagine). A helical transmembrane segment spans residues 1580–1604 (ATSYFVSYIIISFLIVVNMYIAVIL). Topologically, residues 1605–1791 (ENFNTATEES…GVAKGKVHCD (187 aa)) are cytoplasmic.

The protein belongs to the sodium channel (TC 1.A.1.10) family. Nav1.9/SCN11A subfamily. The voltage-resistant sodium channel consists of an ion conducting pore forming alpha-subunit regulated by one or more auxiliary subunits SCN1B, SCN2B and SCN3B. As to expression, expressed in the dorsal root ganglia and trigeminal ganglia, olfactory bulb, hippocampus, cerebellar cortex, spinal cord, spleen, small intestine and placenta.

It localises to the cell membrane. It catalyses the reaction Na(+)(in) = Na(+)(out). Activity is not sensitive to inhibition by tetrodotoxin. Its function is as follows. Sodium channel mediating the voltage-dependent sodium ion permeability of excitable membranes. Assuming opened or closed conformations in response to the voltage difference across the membrane, the protein forms a sodium-selective channel through which sodium ions may pass in accordance with their electrochemical gradient. Involved in membrane depolarization during action potential in nociceptors which function as key relay stations for the electrical transmission of pain signals from the periphery to the central nervous system. Also involved in rapid BDNF-evoked neuronal depolarization. The protein is Sodium channel protein type 11 subunit alpha of Homo sapiens (Human).